The primary structure comprises 723 residues: MSMASSSLATQSFFSSFPLSHRLHFPVPYLLLRSSFFRKPLSLSATSPSSSSSSPSIFLSCFDDALPDKIQQPENSTINSEESECEEEDDEEGDDFTDPILKFFKSRTLTSESTADPARESKFSLQKNRRTSWHLAPDFADPETEIESKPEESVFVTNQQTLGVHIPFESGVAREILELAKNLKENQTLGEMLSGFERRVSDTECVEALVMMGESGFVKSCLYFYEWMSLQEPSLASPRACSVLFTLLGRERMADYILLLLSNLPDKEEFRDVRLYNAAISGLSASQRYDDAWEVYEAMDKINVYPDNVTCAILITTLRKAGRSAKEVWEIFEKMSEKGVKWSQDVFGGLVKSFCDEGLKEEALVIQTEMEKKGIRSNTIVYNTLMDAYNKSNHIEEVEGLFTEMRDKGLKPSAATYNILMDAYARRMQPDIVETLLREMEDLGLEPNVKSYTCLISAYGRTKKMSDMAADAFLRMKKVGLKPSSHSYTALIHAYSVSGWHEKAYASFEEMCKEGIKPSVETYTSVLDAFRRSGDTGKLMEIWKLMLREKIKGTRITYNTLLDGFAKQGLYIEARDVVSEFSKMGLQPSVMTYNMLMNAYARGGQDAKLPQLLKEMAALNLKPDSITYSTMIYAFVRVRDFKRAFFYHKMMVKSGQVPDPRSYEKLRAILEDKAKTKNRKDKTAILGIINSKFGRVKAKTKGKKDEFWKYKTNRTTSPGRHRS.

A chloroplast-targeting transit peptide spans 1-44 (MSMASSSLATQSFFSSFPLSHRLHFPVPYLLLRSSFFRKPLSLS). Residues 70–97 (IQQPENSTINSEESECEEEDDEEGDDFT) form a disordered region. Residues 81–97 (EESECEEEDDEEGDDFT) show a composition bias toward acidic residues. PPR repeat units follow at residues 272-306 (DVRLYNAAISGLSASQRYDDAWEVYEAMDKINVYP), 307-342 (DNVTCAILITTLRKAGRSAKEVWEIFEKMSEKGVKW), 343-377 (SQDVFGGLVKSFCDEGLKEEALVIQTEMEKKGIRS), 378-412 (NTIVYNTLMDAYNKSNHIEEVEGLFTEMRDKGLKP), 413-447 (SAATYNILMDAYARRMQPDIVETLLREMEDLGLEP), 448-483 (NVKSYTCLISAYGRTKKMSDMAADAFLRMKKVGLKP), 484-518 (SSHSYTALIHAYSVSGWHEKAYASFEEMCKEGIKP), 519-553 (SVETYTSVLDAFRRSGDTGKLMEIWKLMLREKIKG), 554-588 (TRITYNTLLDGFAKQGLYIEARDVVSEFSKMGLQP), 589-623 (SVMTYNMLMNAYARGGQDAKLPQLLKEMAALNLKP), and 624-658 (DSITYSTMIYAFVRVRDFKRAFFYHKMMVKSGQVP). The segment at 700 to 723 (TKGKKDEFWKYKTNRTTSPGRHRS) is disordered. Over residues 713–723 (NRTTSPGRHRS) the composition is skewed to polar residues.

Belongs to the PPR family. P subfamily.

It is found in the plastid. The protein resides in the chloroplast. The sequence is that of Pentatricopeptide repeat-containing protein At5g50280, chloroplastic (EMB1006) from Arabidopsis thaliana (Mouse-ear cress).